Here is a 409-residue protein sequence, read N- to C-terminus: MSMMLSNWALSPRYVGQRNLIHCTTLFHTLTRWAKDADDKYHDINSMYENMFTPSNDNVSILQDEGKSDYDTTKASSMEEDISAFNKDLYNFYNIGYAKQIMSASQLENIVKAKGRFVIQSLSTSPYYNLALENYVFKNTPRAKRGPDNCRLLFYINDRCAVIGKNQNLWQEVDLAKLKSKNFELLRRFSGGGTVLHDLGNVNYSYLTSREKFETKFFNKMIIKWLNSLNPELRLDLNERGDIIQDGFKISGSAYKIAGGKAYHHATMLLNADLEQFSGLLEPSLPNNMEWESSGVHSVKSKIKNVGIITPNQFIAVVSERFQKTFKVDGEIPIYYCDEFKSINDEIKDAMNTLQSEQWKYFSGPKFSVKIKDKGLTIKVEKGMIYDCDRNDLIGLEFKGFLENIDSYT.

A BPL/LPL catalytic domain is found at 146–330 (GPDNCRLLFY…RFQKTFKVDG (185 aa)). ATP contacts are provided by residues arginine 188, 193–196 (GTVL), and lysine 249. Lysine 249 serves as a coordination point for (R)-lipoate.

It belongs to the LplA family. Monomer.

The catalysed reaction is L-lysyl-[lipoyl-carrier protein] + (R)-lipoate + ATP = N(6)-[(R)-lipoyl]-L-lysyl-[lipoyl-carrier protein] + AMP + diphosphate + H(+). It participates in protein modification; protein lipoylation via exogenous pathway; protein N(6)-(lipoyl)lysine from lipoate: step 1/2. It functions in the pathway protein modification; protein lipoylation via exogenous pathway; protein N(6)-(lipoyl)lysine from lipoate: step 2/2. Functionally, catalyzes both the ATP-dependent activation of exogenously supplied lipoate to lipoyl-AMP and the transfer of the activated lipoyl onto the lipoyl domains of lipoate-dependent enzymes. This Saccharomyces cerevisiae (strain ATCC 204508 / S288c) (Baker's yeast) protein is Putative lipoate-protein ligase A (AIM22).